Reading from the N-terminus, the 274-residue chain is Tryptophan synthase alpha chain (274 aa).

Catalysis depends on proton acceptor residues Glu-49 and Asp-60.

Belongs to the TrpA family. Tetramer of two alpha and two beta chains.

The catalysed reaction is (1S,2R)-1-C-(indol-3-yl)glycerol 3-phosphate + L-serine = D-glyceraldehyde 3-phosphate + L-tryptophan + H2O. The protein operates within amino-acid biosynthesis; L-tryptophan biosynthesis; L-tryptophan from chorismate: step 5/5. The alpha subunit is responsible for the aldol cleavage of indoleglycerol phosphate to indole and glyceraldehyde 3-phosphate. This is Tryptophan synthase alpha chain from Gluconacetobacter diazotrophicus (strain ATCC 49037 / DSM 5601 / CCUG 37298 / CIP 103539 / LMG 7603 / PAl5).